The chain runs to 186 residues: dTTP/UTP pyrophosphatase (186 aa).

D66 (proton acceptor) is an active-site residue.

This sequence belongs to the Maf family. YhdE subfamily. A divalent metal cation is required as a cofactor.

It localises to the cytoplasm. The enzyme catalyses dTTP + H2O = dTMP + diphosphate + H(+). It carries out the reaction UTP + H2O = UMP + diphosphate + H(+). Its function is as follows. Nucleoside triphosphate pyrophosphatase that hydrolyzes dTTP and UTP. May have a dual role in cell division arrest and in preventing the incorporation of modified nucleotides into cellular nucleic acids. The chain is dTTP/UTP pyrophosphatase from Pyrococcus horikoshii (strain ATCC 700860 / DSM 12428 / JCM 9974 / NBRC 100139 / OT-3).